A 105-amino-acid chain; its full sequence is Nitrogenase-stabilizing/protective protein NifW 2 (105 aa).

Belongs to the NifW family.

May protect the nitrogenase Fe-Mo protein from oxidative damage. The protein is Nitrogenase-stabilizing/protective protein NifW 2 (nifW2) of Trichormus variabilis (strain ATCC 29413 / PCC 7937) (Anabaena variabilis).